The following is a 308-amino-acid chain: tRNA pseudouridine synthase B (308 aa).

The Nucleophile role is filled by aspartate 47.

It belongs to the pseudouridine synthase TruB family. Type 1 subfamily.

The catalysed reaction is uridine(55) in tRNA = pseudouridine(55) in tRNA. Responsible for synthesis of pseudouridine from uracil-55 in the psi GC loop of transfer RNAs. In Xanthomonas campestris pv. campestris (strain 8004), this protein is tRNA pseudouridine synthase B.